Consider the following 590-residue polypeptide: Arginine--tRNA ligase (590 aa).

The 'HIGH' region motif lies at alanine 130–histidine 140.

It belongs to the class-I aminoacyl-tRNA synthetase family. Monomer.

The protein resides in the cytoplasm. It catalyses the reaction tRNA(Arg) + L-arginine + ATP = L-arginyl-tRNA(Arg) + AMP + diphosphate. The sequence is that of Arginine--tRNA ligase from Methylobacterium nodulans (strain LMG 21967 / CNCM I-2342 / ORS 2060).